Consider the following 406-residue polypeptide: tRNA-specific 2-thiouridylase MnmA (406 aa).

ATP is bound by residues 42-49 and leucine 68; that span reads GLSGGVDS. Cysteine 129 serves as the catalytic Nucleophile. Cysteine 129 and cysteine 239 are joined by a disulfide. Glycine 154 is a binding site for ATP. The tract at residues 189 to 191 is interaction with tRNA; sequence KDQ. Cysteine 239 (cysteine persulfide intermediate) is an active-site residue. The interval 344–345 is interaction with tRNA; that stretch reads RY.

This sequence belongs to the MnmA/TRMU family.

The protein localises to the cytoplasm. It catalyses the reaction S-sulfanyl-L-cysteinyl-[protein] + uridine(34) in tRNA + AH2 + ATP = 2-thiouridine(34) in tRNA + L-cysteinyl-[protein] + A + AMP + diphosphate + H(+). Catalyzes the 2-thiolation of uridine at the wobble position (U34) of tRNA, leading to the formation of s(2)U34. This Prochlorococcus marinus (strain SARG / CCMP1375 / SS120) protein is tRNA-specific 2-thiouridylase MnmA.